The following is a 128-amino-acid chain: Large ribosomal subunit protein uL22 (128 aa).

Belongs to the universal ribosomal protein uL22 family. In terms of assembly, part of the 50S ribosomal subunit.

In terms of biological role, this protein binds specifically to 23S rRNA; its binding is stimulated by other ribosomal proteins, e.g. L4, L17, and L20. It is important during the early stages of 50S assembly. It makes multiple contacts with different domains of the 23S rRNA in the assembled 50S subunit and ribosome. Functionally, the globular domain of the protein is located near the polypeptide exit tunnel on the outside of the subunit, while an extended beta-hairpin is found that lines the wall of the exit tunnel in the center of the 70S ribosome. The sequence is that of Large ribosomal subunit protein uL22 from Methylocella silvestris (strain DSM 15510 / CIP 108128 / LMG 27833 / NCIMB 13906 / BL2).